The primary structure comprises 479 residues: T-box transcription factor TBX1 (479 aa).

2 stretches are compositionally biased toward low complexity: residues 15-31 and 59-86; these read ASSL…ADPF and YPFA…AAAV. Residues 15 to 86 form a disordered region; the sequence is ASSLSGLGSP…GPGASRAAAV (72 aa). Residues 108-286 constitute a DNA-binding region (T-box); that stretch reads LWDEFNQLGT…SNPFAKGFRD (179 aa). Positions 311–398 are disordered; that stretch reads RNPVASPTQP…APGASEPLHH (88 aa). Residues 313–322 are compositionally biased toward polar residues; the sequence is PVASPTQPNG. Residues 323 to 338 are compositionally biased toward basic and acidic residues; sequence SDKDAAEARREFDRDS. A Nuclear localization signal motif is present at residues 415–426; the sequence is KSRPAPYPLPGL.

In terms of assembly, binds DNA as a dimer. Interacts with DSCR6. Interacts with NKX2-5. Expressed in skeletal muscle, lung and testis. Highly expressed in hair follicle stem cell, but not in terminally differentiating cells.

It is found in the nucleus. Its function is as follows. Transcription factor that plays a key role in cardiovascular development by promoting pharyngeal arch segmentation during embryonic development. Also involved in craniofacial muscle development. Together with NKX2-5, acts as a regulator of asymmetric cardiac morphogenesis by promoting expression of PITX2. Acts upstream of TBX1 for the formation of the thymus and parathyroid glands from the third pharyngeal pouch. Required for hair follicle stem cell self-renewal. Binds to the palindromic T site 5'-TTCACACCTAGGTGTGAA-3' DNA sequence. This Mus musculus (Mouse) protein is T-box transcription factor TBX1.